The following is a 140-amino-acid chain: uncharacterized protein (140 aa).

This is an uncharacterized protein from Xylella fastidiosa (strain 9a5c).